Reading from the N-terminus, the 381-residue chain is E3 ubiquitin-protein ligase KCMF1 (381 aa).

Ser2 carries the N-acetylserine modification. Ser2 carries the phosphoserine modification. The ZZ-type zinc finger occupies 4 to 60 (HEGVSCDACLKGNFRGRRYKCLICYDYDLCASCYESGATTTRHTTDHPMQCILTRVD). The Zn(2+) site is built by Cys9, Cys12, Cys24, Cys27, Cys33, Cys36, His46, and His50. Residues 78–101 (FTCPYCGKMGYTETSLQEHVTSEH) form a C2H2-type zinc finger. The interval 154 to 193 (MFHPGRGLGGPRARRSNMHFTSSSTGGLSSSQSSYSPSNR) is disordered. Phosphoserine occurs at positions 169, 189, and 212. Low complexity predominate over residues 175-191 (SSSTGGLSSSQSSYSPS). A coiled-coil region spans residues 225-257 (SQLQQLQMQLQLERQHAQAARQQLETARNATRR). The disordered stretch occupies residues 294 to 314 (TRLNDPKMSETERQSMESERA). A compositionally biased stretch (basic and acidic residues) spans 297-314 (NDPKMSETERQSMESERA). Phosphoserine is present on residues Ser335 and Ser336.

The protein belongs to the KCMF1 family. In terms of assembly, component of the SIFI complex, composed of KCMF1, UBR4 and calmodulin (CALM1, CALM2 or CALM3). Spleen, small intestine, ovary, peripheral blood, lung, kidney and pancreas. Expressed at low levels in the thymus, prostate, testis, colon, heart, brain, placenta and liver.

The protein resides in the cytoplasm. It is found in the late endosome. Its subcellular location is the lysosome. It carries out the reaction S-ubiquitinyl-[E2 ubiquitin-conjugating enzyme]-L-cysteine + [acceptor protein]-L-lysine = [E2 ubiquitin-conjugating enzyme]-L-cysteine + N(6)-ubiquitinyl-[acceptor protein]-L-lysine.. It participates in protein modification; protein ubiquitination. Its function is as follows. E3 ubiquitin-protein ligase which accepts ubiquitin from an E2 ubiquitin-conjugating enzyme and then transfers it to targeted substrates, promoting their degradation by the proteasome. Together with UBR4, component of the N-end rule pathway: ubiquitinates proteins bearing specific N-terminal residues that are destabilizing according to the N-end rule, leading to their degradation. Does not ubiquitinate proteins that are acetylated at the N-terminus. Together with UBR4, part of a protein quality control pathway that catalyzes ubiquitination and degradation of proteins that have been oxidized in response to reactive oxygen species (ROS): recognizes proteins with an Arg-CysO3(H) degron at the N-terminus, and mediates assembly of heterotypic 'Lys-63'-/'Lys-27'-linked branched ubiquitin chains on oxidized proteins, leading to their degradation by autophagy. Catalytic component of the SIFI complex, a multiprotein complex required to inhibit the mitochondrial stress response after a specific stress event has been resolved: ubiquitinates and degrades (1) components of the HRI-mediated signaling of the integrated stress response, such as DELE1 and EIF2AK1/HRI, as well as (2) unimported mitochondrial precursors. Within the SIFI complex, UBR4 initiates ubiquitin chain that are further elongated or branched by KCMF1. This chain is E3 ubiquitin-protein ligase KCMF1, found in Homo sapiens (Human).